A 96-amino-acid chain; its full sequence is Growth-regulated alpha protein (96 aa).

The first 24 residues, 1 to 24 (MIPATRSLLCAALLLLATSRLATG), serve as a signal peptide directing secretion. Intrachain disulfides connect Cys-33–Cys-59 and Cys-35–Cys-75.

The protein belongs to the intercrine alpha (chemokine CxC) family. The N-terminal processed form KC(5-72) is produced by proteolytic cleavage after secretion from bone marrow stromal cells.

It is found in the secreted. Its function is as follows. Has chemotactic activity for neutrophils. Contributes to neutrophil activation during inflammation. Hematoregulatory chemokine, which, in vitro, suppresses hematopoietic progenitor cell proliferation. KC(5-72) shows a highly enhanced hematopoietic activity. The protein is Growth-regulated alpha protein (Cxcl1) of Mus musculus (Mouse).